A 187-amino-acid chain; its full sequence is dITP/XTP pyrophosphatase (187 aa).

Residue 7-12 (TGNKHK) coordinates substrate. Residues Glu-36 and Asp-64 each contribute to the Mg(2+) site. The Proton acceptor role is filled by Asp-64. Substrate is bound by residues Ala-65, 140–143 (FAFD), Lys-163, and 168–169 (HR).

Belongs to the HAM1 NTPase family. In terms of assembly, homodimer. Requires Mg(2+) as cofactor.

It carries out the reaction XTP + H2O = XMP + diphosphate + H(+). It catalyses the reaction dITP + H2O = dIMP + diphosphate + H(+). The catalysed reaction is ITP + H2O = IMP + diphosphate + H(+). Functionally, pyrophosphatase that catalyzes the hydrolysis of nucleoside triphosphates to their monophosphate derivatives, with a high preference for the non-canonical purine nucleotides XTP (xanthosine triphosphate), dITP (deoxyinosine triphosphate) and ITP. Seems to function as a house-cleaning enzyme that removes non-canonical purine nucleotides from the nucleotide pool, thus preventing their incorporation into DNA/RNA and avoiding chromosomal lesions. This Methanothermobacter marburgensis (strain ATCC BAA-927 / DSM 2133 / JCM 14651 / NBRC 100331 / OCM 82 / Marburg) (Methanobacterium thermoautotrophicum) protein is dITP/XTP pyrophosphatase.